The primary structure comprises 106 residues: UPF0213 protein KPN78578_35340 (106 aa).

The GIY-YIG domain occupies 13 to 88; that stretch reads VCWFLYLIRT…KQLTKREKER (76 aa).

This sequence belongs to the UPF0213 family.

This chain is UPF0213 protein KPN78578_35340, found in Klebsiella pneumoniae subsp. pneumoniae (strain ATCC 700721 / MGH 78578).